The primary structure comprises 556 residues: (S)-N-methylcanadine 1-hydroxylase CYP82Y1 (556 aa).

The chain crosses the membrane as a helical span at residues 18–38 (TAVGTLILAFLLTLSPVIIYY). Heme is bound at residue Cys500.

This sequence belongs to the cytochrome P450 family. Heme serves as cofactor. Highly expressed in capsules. Expressed is stems.

Its subcellular location is the membrane. The catalysed reaction is (S)-cis-N-methylcanadine + reduced [NADPH--hemoprotein reductase] + O2 = (S)-1-hydroxy-N-methylcanadine + oxidized [NADPH--hemoprotein reductase] + H2O + H(+). It functions in the pathway alkaloid biosynthesis. Its function is as follows. Cytochrome P450 involved in the biosynthesis of the benzylisoquinoline alkaloid noscapine. Converts (S)-N-methylcanadine to (S)-1-hydroxy-N-methylcanadine. In Papaver somniferum (Opium poppy), this protein is (S)-N-methylcanadine 1-hydroxylase CYP82Y1.